Reading from the N-terminus, the 174-residue chain is Large ribosomal subunit protein uL10 (174 aa).

Belongs to the universal ribosomal protein uL10 family. In terms of assembly, part of the ribosomal stalk of the 50S ribosomal subunit. The N-terminus interacts with L11 and the large rRNA to form the base of the stalk. The C-terminus forms an elongated spine to which L12 dimers bind in a sequential fashion forming a multimeric L10(L12)X complex.

In terms of biological role, forms part of the ribosomal stalk, playing a central role in the interaction of the ribosome with GTP-bound translation factors. In Anaeromyxobacter sp. (strain K), this protein is Large ribosomal subunit protein uL10.